Here is a 306-residue protein sequence, read N- to C-terminus: Ectoine dioxygenase (306 aa).

Gln127 is an L-ectoine binding site. Lys133 provides a ligand contact to 2-oxoglutarate. 3 residues coordinate Fe cation: His144, Asp146, and His245.

Belongs to the PhyH family. EctD subfamily. Homodimer. It depends on Fe(2+) as a cofactor.

The catalysed reaction is L-ectoine + 2-oxoglutarate + O2 = 5-hydroxyectoine + succinate + CO2. Its function is as follows. Involved in the biosynthesis of 5-hydroxyectoine, called compatible solute, which helps organisms to survive extreme osmotic stress by acting as a highly soluble organic osmolyte. Catalyzes the 2-oxoglutarate-dependent selective hydroxylation of L-ectoine to yield (4S,5S)-5-hydroxyectoine. The protein is Ectoine dioxygenase of Sphingopyxis alaskensis (strain DSM 13593 / LMG 18877 / RB2256) (Sphingomonas alaskensis).